A 102-amino-acid polypeptide reads, in one-letter code: Serum amyloid A-5 protein (102 aa).

The tract at residues 68 to 102 (GRGHEDSMADQEANRWGRSGNDPNHYRPAGLPDKY) is disordered. Over residues 69-82 (RGHEDSMADQEANR) the composition is skewed to basic and acidic residues.

Belongs to the SAA family. As to expression, expressed by the liver; secreted in plasma.

It localises to the secreted. Functionally, major acute phase reactant. Apolipoprotein of the HDL complex. This chain is Serum amyloid A-5 protein, found in Mesocricetus auratus (Golden hamster).